The following is a 268-amino-acid chain: tRNA (guanine-N(1)-)-methyltransferase (268 aa).

Residues Gly113 and Ile133 to Leu138 each bind S-adenosyl-L-methionine. The segment at Arg238–Arg268 is disordered.

Belongs to the RNA methyltransferase TrmD family. As to quaternary structure, homodimer.

The protein resides in the cytoplasm. It catalyses the reaction guanosine(37) in tRNA + S-adenosyl-L-methionine = N(1)-methylguanosine(37) in tRNA + S-adenosyl-L-homocysteine + H(+). In terms of biological role, specifically methylates guanosine-37 in various tRNAs. This is tRNA (guanine-N(1)-)-methyltransferase from Thermomicrobium roseum (strain ATCC 27502 / DSM 5159 / P-2).